The chain runs to 156 residues: SsrA-binding protein (156 aa).

This sequence belongs to the SmpB family.

The protein resides in the cytoplasm. Functionally, required for rescue of stalled ribosomes mediated by trans-translation. Binds to transfer-messenger RNA (tmRNA), required for stable association of tmRNA with ribosomes. tmRNA and SmpB together mimic tRNA shape, replacing the anticodon stem-loop with SmpB. tmRNA is encoded by the ssrA gene; the 2 termini fold to resemble tRNA(Ala) and it encodes a 'tag peptide', a short internal open reading frame. During trans-translation Ala-aminoacylated tmRNA acts like a tRNA, entering the A-site of stalled ribosomes, displacing the stalled mRNA. The ribosome then switches to translate the ORF on the tmRNA; the nascent peptide is terminated with the 'tag peptide' encoded by the tmRNA and targeted for degradation. The ribosome is freed to recommence translation, which seems to be the essential function of trans-translation. The chain is SsrA-binding protein from Desulfitobacterium hafniense (strain DSM 10664 / DCB-2).